The sequence spans 139 residues: Putative nickel-responsive regulator (139 aa).

4 residues coordinate Ni(2+): His-79, His-90, His-92, and Cys-98.

It belongs to the transcriptional regulatory CopG/NikR family. Requires Ni(2+) as cofactor.

Transcriptional regulator. The sequence is that of Putative nickel-responsive regulator from Geobacter sulfurreducens (strain ATCC 51573 / DSM 12127 / PCA).